Consider the following 2531-residue polypeptide: Neurogenic locus notch homolog protein 1 (2531 aa).

Positions 1–18 (MPRLLTPLLCLTLLPALA) are cleaved as a signal peptide. Topologically, residues 19 to 1725 (ARGLRCSQPS…VEPPLPSQLH (1707 aa)) are extracellular. 4 consecutive EGF-like domains span residues 20 to 58 (RGLRCSQPSGTCLNGGRCEVANGTEACVCSGAFVGQRCQ), 59 to 99 (DSNP…PLCL), 102 to 139 (LDNACLANPCRNGGTCDLLTLTEYKCRCPPGWSGKSCQ), and 140 to 176 (QADPCASNPCANGGQCLPFESSYICRCPPGFHGPTCR). Cystine bridges form between Cys24–Cys37, Cys31–Cys46, Cys63–Cys74, Cys68–Cys87, Cys89–Cys98, Cys106–Cys117, Cys111–Cys127, Cys129–Cys138, Cys144–Cys155, Cys149–Cys164, Cys166–Cys175, Cys182–Cys195, Cys189–Cys204, Cys206–Cys215, Cys222–Cys233, Cys227–Cys243, Cys245–Cys254, Cys261–Cys272, Cys266–Cys281, Cys283–Cys292, Cys299–Cys312, Cys306–Cys321, Cys323–Cys332, Cys339–Cys350, Cys344–Cys359, Cys361–Cys370, Cys376–Cys387, Cys381–Cys398, Cys400–Cys409, Cys416–Cys429, Cys423–Cys438, and Cys440–Cys449. Ser65 carries an O-linked (Glc...) serine glycan. An O-linked (Fuc...) threonine glycan is attached at Thr73. Thr116 carries an O-linked (Fuc...) threonine glycan. A glycan (O-linked (Glc...) serine) is linked at Ser146. In terms of domain architecture, EGF-like 5; calcium-binding spans 178 to 216 (DVNECSQNPGLCRHGGTCHNEIGSYRCACRATHTGPHCE). A glycan (O-linked (Fuc...) threonine) is linked at Thr194. Positions 218–255 (PYVPCSPSPCQNGGTCRPTGDTTHECACLPGFAGQNCE) constitute an EGF-like 6 domain. A glycan (O-linked (Fuc...) threonine; alternate) is linked at Thr232. A glycan (O-linked (GalNAc...) threonine; alternate) is linked at Thr232. The EGF-like 7; calcium-binding domain occupies 257 to 293 (NVDDCPGNNCKNGGACVDGVNTYNCRCPPEWTGQYCT). In terms of domain architecture, EGF-like 8; calcium-binding spans 295 to 333 (DVDECQLMPNACQNGGTCHNTHGGYNCVCVNGWTGEDCS). Thr311 carries an O-linked (Fuc...) threonine glycan. Positions 335–371 (NIDDCASAACFQGATCHDRVASFYCECPHGRTGLLCH) constitute an EGF-like 9; calcium-binding domain. A glycan (O-linked (Glc...) serine) is linked at Ser341. Thr349 is a glycosylation site (O-linked (Fuc...) threonine). The EGF-like 10; calcium-binding domain maps to 372–410 (LNDACISNPCNEGSNCDTNPVNGKAICTCPSGYTGPACS). An O-linked (Glc...) serine glycan is attached at Ser378. The EGF-like 11; calcium-binding domain maps to 412–450 (DVDECALGANPCEHAGKCLNTLGSFECQCLQGYTGPRCE). Residues 420-421 (AN) form an interaction with DLL4 region. Thr432 and Ser435 together coordinate Ca(2+). Ser435 carries an O-linked (Glc...) serine glycan. Residues 448 to 452 (RCEID) are interaction with DLL4. Positions 452, 453, and 455 each coordinate Ca(2+). The 37-residue stretch at 452–488 (DVNECISNPCQNDATCLDQIGEFQCICMPGYEGVYCE) folds into the EGF-like 12; calcium-binding domain. 3 disulfide bridges follow: Cys456–Cys467, Cys461–Cys476, and Cys478–Cys487. O-linked (Glc...) serine glycosylation occurs at Ser458. Thr466 carries O-linked (Fuc...) threonine glycosylation. Ca(2+)-binding residues include Asp469 and Gln470. The Ca(2+) site is built by Asn490, Thr491, and Glu493. The 37-residue stretch at 490–526 (NTDECASSPCLHNGHCMDKINEFQCQCPKGFNGHLCQ) folds into the EGF-like 13; calcium-binding domain. 75 disulfide bridges follow: Cys494/Cys505, Cys499/Cys514, Cys516/Cys525, Cys532/Cys543, Cys537/Cys552, Cys554/Cys563, Cys570/Cys580, Cys575/Cys589, Cys591/Cys600, Cys607/Cys618, Cys612/Cys627, Cys629/Cys638, Cys645/Cys655, Cys650/Cys664, Cys666/Cys675, Cys682/Cys693, Cys687/Cys702, Cys704/Cys713, Cys720/Cys730, Cys725/Cys739, Cys741/Cys750, Cys757/Cys768, Cys762/Cys777, Cys779/Cys788, Cys795/Cys806, Cys800/Cys815, Cys817/Cys826, Cys833/Cys844, Cys838/Cys855, Cys857/Cys866, Cys873/Cys884, Cys878/Cys893, Cys895/Cys904, Cys911/Cys922, Cys916/Cys931, Cys933/Cys942, Cys949/Cys960, Cys954/Cys969, Cys971/Cys980, Cys987/Cys998, Cys992/Cys1007, Cys1009/Cys1018, Cys1025/Cys1036, Cys1030/Cys1045, Cys1047/Cys1056, Cys1063/Cys1074, Cys1068/Cys1083, Cys1085/Cys1094, Cys1101/Cys1122, Cys1116/Cys1131, Cys1133/Cys1142, Cys1149/Cys1160, Cys1154/Cys1169, Cys1171/Cys1180, Cys1187/Cys1198, Cys1192/Cys1207, Cys1209/Cys1218, Cys1225/Cys1244, Cys1238/Cys1253, Cys1255/Cys1264, Cys1271/Cys1284, Cys1276/Cys1293, Cys1295/Cys1304, Cys1311/Cys1322, Cys1316/Cys1334, Cys1336/Cys1345, Cys1352/Cys1363, Cys1357/Cys1372, Cys1374/Cys1383, Cys1391/Cys1403, Cys1397/Cys1414, Cys1416/Cys1425, Cys1449/Cys1472, Cys1454/Cys1467, and Cys1463/Cys1479. Ser496 carries O-linked (Glc...) serine glycosylation. Asp507 and Lys508 together coordinate Ca(2+). Residues 528-564 (DVDECASTPCKNGAKCLDGPNTYTCVCTEGYTGTHCE) enclose the EGF-like 14; calcium-binding domain. A glycan (O-linked (Glc...) serine) is linked at Ser534. The EGF-like 15; calcium-binding domain occupies 566-601 (DIDECDPDPCHYGSCKDGVATFTCLCQPGYTGHHCE). In terms of domain architecture, EGF-like 16; calcium-binding spans 603–639 (NINECHSQPCRHGGTCQDRDNSYLCLCLKGTTGPNCE). O-linked (Glc...) serine glycosylation occurs at Ser609. O-linked (Fuc...) threonine glycosylation occurs at Thr617. An EGF-like 17; calcium-binding domain is found at 641–676 (NLDDCASNPCDSGTCLDKIDGYECACEPGYTGSMCN). Residue Ser647 is glycosylated (O-linked (Glc...) serine). Residues 678–714 (NIDECAGSPCHNGGTCEDGIAGFTCRCPEGYHDPTCL) form the EGF-like 18; calcium-binding domain. Residue Thr692 is glycosylated (O-linked (Fuc...) threonine). The EGF-like 19; calcium-binding domain maps to 716–751 (EVNECNSNPCIHGACRDGLNGYKCDCAPGWSGTNCD). Ser722 carries an O-linked (Glc...) serine glycan. In terms of domain architecture, EGF-like 20; calcium-binding spans 753-789 (NNNECESNPCVNGGTCKDMTSGYVCTCREGFSGPNCQ). Residue Ser759 is glycosylated (O-linked (Glc...) serine). An O-linked (Fuc...) threonine glycan is attached at Thr767. O-linked (GlcNAc) serine glycosylation occurs at Ser784. In terms of domain architecture, EGF-like 21; calcium-binding spans 791–827 (NINECASNPCLNQGTCIDDVAGYKCNCPLPYTGATCE). An O-linked (Glc...) serine glycan is attached at Ser797. Thr805 carries an O-linked (Fuc...) threonine glycan. An EGF-like 22 domain is found at 829–867 (VLAPCATSPCKNSGVCKESEDYESFSCVCPTGWQGQTCE). Positions 869 to 905 (DINECVKSPCRHGASCQNTNGSYRCLCQAGYTGRNCE) constitute an EGF-like 23; calcium-binding domain. Asn888 is a glycosylation site (N-linked (GlcNAc...) asparagine). The O-linked (GlcNAc) threonine glycan is linked to Thr900. One can recognise an EGF-like 24 domain in the interval 907–943 (DIDDCRPNPCHNGGSCTDGINTAFCDCLPGFQGAFCE). A glycan (O-linked (Fuc) serine) is linked at Ser921. The region spanning 945–981 (DINECASNPCQNGANCTDCVDSYTCTCPVGFNGIHCE) is the EGF-like 25; calcium-binding domain. Ser951 carries O-linked (Glc...) serine glycosylation. N-linked (GlcNAc...) asparagine glycosylation occurs at Asn959. An EGF-like 26 domain is found at 983-1019 (NTPDCTESSCFNGGTCVDGINSFTCLCPPGFTGSYCQ). Thr997 is a glycosylation site (O-linked (Fuc...) threonine). The region spanning 1021-1057 (DVNECDSRPCLHGGTCQDSYGTYKCTCPQGYTGLNCQ) is the EGF-like 27; calcium-binding domain. The O-linked (Glc...) serine glycan is linked to Ser1027. Residue Thr1035 is glycosylated (O-linked (Fuc...) threonine). 2 EGF-like domains span residues 1059 to 1095 (LVRWCDSAPCKNGGRCWQTNTQYHCECRSGWTGVNCD) and 1097 to 1143 (LSVS…SYCE). O-linked (Glc...) serine glycosylation is present at Ser1065. Positions 1145-1181 (EVDECSPNPCQNGATCTDYLGGFSCKCVAGYHGSNCS) constitute an EGF-like 30; calcium-binding domain. An O-linked (Fuc...) threonine glycan is attached at Thr1159. A glycan (N-linked (GlcNAc...) asparagine) is linked at Asn1179. In terms of domain architecture, EGF-like 31; calcium-binding spans 1183-1219 (EINECLSQPCQNGGTCIDLTNSYKCSCPRGTQGVHCE). Residue Ser1189 is glycosylated (O-linked (Glc...) serine). A glycan (O-linked (Fuc...) threonine) is linked at Thr1197. The EGF-like 32; calcium-binding domain maps to 1221–1265 (NVDDCHPPLDPASRSPKCFNNGTCVDQVGGYTCTCPPGFVGERCE). N-linked (GlcNAc...) asparagine glycosylation is present at Asn1241. 4 consecutive EGF-like domains span residues 1267-1305 (DVNECLSNPCDPRGTQNCVQRVNDFHCECRAGHTGRRCE), 1307-1346 (VINGCRGKPCKNGGVCAVASNTARGFICRCPAGFEGATCE), 1348-1384 (DARTCGSLRCLNGGTCISGPRSPTCLCLGSFTGPECQ), and 1387-1426 (ASSPCVGSNPCYNQGTCEPTSENPFYRCLCPAKFNGLLCH). The O-linked (Glc...) serine glycan is linked to Ser1273. Thr1362 carries an O-linked (Fuc...) threonine glycan. Thr1379 is a glycosylation site (O-linked (GlcNAc...) threonine). O-linked (Fuc...) threonine; alternate glycosylation occurs at Thr1402. An O-linked (GalNAc...) threonine; alternate glycan is attached at Thr1402. 3 LNR repeats span residues 1449–1489 (CELP…PWKN), 1490–1531 (CTQS…CNPL), and 1532–1571 (YDQYCKDHFSDGHCDQGCNSAECEWDGLDCAEHVPERLAA). Residues Asp1457, Asn1460, Asp1475, and Asp1478 each contribute to the Ca(2+) site. Asn1489 carries N-linked (GlcNAc...) asparagine glycosylation. Cystine bridges form between Cys1490-Cys1514, Cys1496-Cys1509, Cys1505-Cys1521, Cys1536-Cys1549, and Cys1545-Cys1561. N-linked (GlcNAc...) asparagine glycosylation is present at Asn1587. The interaction with PSEN1 stretch occupies residues 1718 to 1750 (PPLPSQLHLMYVAAAAFVLLFFVGCGVLLSRKR). Residues 1726-1746 (LMYVAAAAFVLLFFVGCGVLL) traverse the membrane as a helical segment. Over 1747–2531 (SRKRRRQHGQ…QITHIPEAFK (785 aa)) the chain is Cytoplasmic. Residue Lys1749 forms a Glycyl lysine isopeptide (Lys-Gly) (interchain with G-Cter in ubiquitin) linkage. The disordered stretch occupies residues 1770–1798 (KKKRREPLGEDSVGLKPLKNASDGALMDD). Thr1851 is subject to Phosphothreonine. 5 ANK repeats span residues 1917-1946 (TGETALHLAARYSRSDAAKRLLEASADANI), 1950-1980 (MGRTPLHAAVSADAQGVFQILLRNRATDLDA), 1984-2013 (DGTTPLILAARLAVEGMLEDLINSHADVNA), 2017-2046 (LGKSALHWAAAVNNVDAAVVLLKNGANKDM), and 2050-2079 (KEETPLFLAAREGSYETAKVLLDHFANRDI). The HIF1AN-binding stretch occupies residues 1937–1945 (LLEASADAN). Position 1945 is a (3S)-3-hydroxyasparagine; by HIF1AN; partial (Asn1945). The tract at residues 2004–2012 (LINSHADVN) is HIF1AN-binding. Residue Asn2012 is modified to (3S)-3-hydroxyasparagine; by HIF1AN; partial. 3 disordered regions span residues 2140–2185 (KSAT…DSSS), 2382–2428 (QPQN…SLPV), and 2440–2531 (PTSL…EAFK). Residues 2382–2395 (QPQNLQPPSQPHLS) show a composition bias toward low complexity. Residues 2440–2478 (PTSLPSSMVPPMTTTQFLTPPSQHSYSSSPVDNTPSHQL) show a composition bias toward polar residues. Positions 2488–2503 (PSPESPDQWSSSSPHS) are enriched in low complexity. The segment covering 2504-2524 (NISDWSEGISSPPTTMPSQIT) has biased composition (polar residues).

It belongs to the NOTCH family. Heterodimer of a C-terminal fragment N(TM) and an N-terminal fragment N(EC) which are probably linked by disulfide bonds. Interacts with DNER, DTX1, DTX2 and RBPJ/RBPSUH. Also interacts with MAML1, MAML2 and MAML3 which act as transcriptional coactivators for NOTCH1. Notch 1 intracellular domain interacts with SNW1; the interaction involves multimerized NOTCH1 NICD and is implicated in a formation of an intermediate preactivation complex which associates with DNA-bound CBF-1/RBPJ. The activated membrane-bound form interacts with AAK1 which promotes NOTCH1 stabilization. Forms a trimeric complex with FBXW7 and SGK1. Interacts with HIF1AN. HIF1AN negatively regulates the function of notch intracellular domain (NICD), accelerating myogenic differentiation. Interacts (via NICD) with SNAI1 (via zinc fingers); the interaction induces SNAI1 degradation via MDM2-mediated ubiquitination and inhibits SNAI1-induced cell invasion. Interacts (via NICD) with MDM2A. Interacts (via NICD) with BCL6; the interaction decreases MAML1 recruitment by NOTCH1 NICD on target genes DNA and inhibits NOTCH1 transactivation activity. Interacts with THBS4. Interacts (via the EGF-like repeat region) with CCN3 (via CTCK domain). Interacts (via EGF-like domains) with DLL4 (via N-terminal DSL and MNNL domains). Interacts with ZMIZ1. Interacts (via NICD domain) with MEGF10 (via the cytoplasmic domain). Interacts with DLL1 and JAG1. Interacts (via NICD domain) with PRAG1. Forms a complex with PRAG1, N1ICD and MAML1, in a MAML1-dependent manner. Interacts (via transmembrane region) with PSEN1; the interaction is direct. Interacts with ZFP64. In terms of processing, synthesized in the endoplasmic reticulum as an inactive form which is proteolytically cleaved by a furin-like convertase in the trans-Golgi network before it reaches the plasma membrane to yield an active, ligand-accessible form. Cleavage results in a C-terminal fragment N(TM) and a N-terminal fragment N(EC). Following ligand binding, it is cleaved by ADAM17 to yield a membrane-associated intermediate fragment called notch extracellular truncation (NEXT). Following endocytosis, this fragment is then cleaved by one of the catalytic subunits of gamma-secretase (PSEN1 or PSEN2) to release a Notch-derived peptide containing the intracellular domain (NICD) from the membrane. Post-translationally, phosphorylated. O-linked glycosylation by GALNT11 is involved in determination of left/right symmetry: glycosylation promotes activation of NOTCH1, possibly by promoting cleavage by ADAM17, modulating the balance between motile and immotile (sensory) cilia at the left-right organiser (LRO). O-glycosylated on the EGF-like domains. O-glucosylated at Ser-435 by KDELC1 and KDELC2. Contains both O-linked fucose and O-linked glucose in the EGF-like domains 11, 12 and 13, which are interacting with the residues on DLL4. O-glycosylation at Ser-1027 is only partial. MFNG-, RFNG- and LFNG-mediated modification of O-fucose residues at specific EGF-like domains results in inhibition of its activation by JAG1 and enhancement of its activation by DLL1 via an increased binding to DLL1. In terms of processing, ubiquitinated. Undergoes 'Lys-29'-linked polyubiquitination by ITCH; promotes the lysosomal degradation of non-activated internalized NOTCH1. Deubiquitination by USP12 is required for transport of internalized non-activated receptor from late endosomes to lysosomes for degradation. Monoubiquitination at Lys-1749 is required for activation by gamma-secretase cleavage, it promotes interaction with AAK1, which stabilizes it. Deubiquitination by EIF3F is necessary for nuclear import of activated Notch. Post-translationally, hydroxylated at Asn-1945 and Asn-2012 by HIF1AN. Hydroxylation reduces affinity for HI1AN and may thus indirectly modulate negative regulation of NICD. Highly expressed in the brain, lung and thymus. Expressed at lower levels in the spleen, bone-marrow, spinal cord, eyes, mammary gland, liver, intestine, skeletal muscle, kidney and heart. In the hair follicle, highly expressed exclusively in the epithelial compartment.

It localises to the cell membrane. Its subcellular location is the late endosome membrane. The protein resides in the nucleus. Its function is as follows. Functions as a receptor for membrane-bound ligands Jagged-1 (JAG1), Jagged-2 (JAG2) and Delta-1 (DLL1) to regulate cell-fate determination. Upon ligand activation through the released notch intracellular domain (NICD) it forms a transcriptional activator complex with RBPJ/RBPSUH and activates genes of the enhancer of split locus. Affects the implementation of differentiation, proliferation and apoptotic programs. Involved in angiogenesis; negatively regulates endothelial cell proliferation and migration and angiogenic sprouting. Involved in the maturation of both CD4(+) and CD8(+) cells in the thymus. Important for follicular differentiation and possibly cell fate selection within the follicle. During cerebellar development, functions as a receptor for neuronal DNER and is involved in the differentiation of Bergmann glia. Represses neuronal and myogenic differentiation. May play an essential role in postimplantation development, probably in some aspect of cell specification and/or differentiation. May be involved in mesoderm development, somite formation and neurogenesis. May enhance HIF1A function by sequestering HIF1AN away from HIF1A. Required for the THBS4 function in regulating protective astrogenesis from the subventricular zone (SVZ) niche after injury. Involved in determination of left/right symmetry by modulating the balance between motile and immotile (sensory) cilia at the left-right organiser (LRO). This Mus musculus (Mouse) protein is Neurogenic locus notch homolog protein 1 (Notch1).